The chain runs to 269 residues: Shikimate dehydrogenase (NADP(+)) (269 aa).

Shikimate-binding positions include 15–17 (SLS) and threonine 62. Lysine 66 functions as the Proton acceptor in the catalytic mechanism. Residues asparagine 86 and aspartate 100 each coordinate shikimate. Residues 124 to 128 (GAGGA), 147 to 152 (NRTPER), and isoleucine 211 contribute to the NADP(+) site. Tyrosine 213 serves as a coordination point for shikimate. Glycine 234 provides a ligand contact to NADP(+).

Belongs to the shikimate dehydrogenase family. As to quaternary structure, homodimer.

It catalyses the reaction shikimate + NADP(+) = 3-dehydroshikimate + NADPH + H(+). Its pathway is metabolic intermediate biosynthesis; chorismate biosynthesis; chorismate from D-erythrose 4-phosphate and phosphoenolpyruvate: step 4/7. Functionally, involved in the biosynthesis of the chorismate, which leads to the biosynthesis of aromatic amino acids. Catalyzes the reversible NADPH linked reduction of 3-dehydroshikimate (DHSA) to yield shikimate (SA). The chain is Shikimate dehydrogenase (NADP(+)) from Methanococcoides burtonii (strain DSM 6242 / NBRC 107633 / OCM 468 / ACE-M).